Reading from the N-terminus, the 328-residue chain is Olfactory receptor 4A16 (328 aa).

Topologically, residues 1–23 (MRPSSNVTEFVLLGLTQDPDVKK) are extracellular. Residue N6 is glycosylated (N-linked (GlcNAc...) asparagine). The chain crosses the membrane as a helical span at residues 24 to 47 (TLFVMFLLIYIVTMVGNLLIWVTT). Topologically, residues 48–55 (IGSPSLGS) are cytoplasmic. Residues 56-77 (LMYFFLAYLSLMDAIYSTAMSP) form a helical membrane-spanning segment. At 78–98 (KLMIDLLCDKIAISLSACMGQ) the chain is on the extracellular side. C95 and C187 are joined by a disulfide. Residues 99-118 (LFIEHLLGGAEVFLLVVMAY) traverse the membrane as a helical segment. The Cytoplasmic portion of the chain corresponds to 119–137 (DRYVAISKPLHYLNIMNRL). The chain crosses the membrane as a helical span at residues 138-156 (VCILLLVVAMIGGFVHSVV). Over 157 to 193 (QIVFLYSLPICGPNVIDHSVCDMYPLLELLCLDTYFI) the chain is Extracellular. The helical transmembrane segment at 194–217 (GLTVVANGGIICMVIFTFLLISCG) threads the bilayer. Over 218 to 233 (VILNFLKTYSQEERHK) the chain is Cytoplasmic. A helical transmembrane segment spans residues 234-256 (ALPTCISHIIVVALVFVPCIFMY). Residues 257–267 (VRPVSNFPFDK) are Extracellular-facing. Residues 268–287 (LMTVFYSIITLMLNPLIYSL) form a helical membrane-spanning segment. At 288 to 328 (RQSEMKNAMKNLWCEKLSIVRKRVSPTLNIFIPSSKATNRR) the chain is on the cytoplasmic side.

It belongs to the G-protein coupled receptor 1 family.

It localises to the cell membrane. In terms of biological role, odorant receptor. This is Olfactory receptor 4A16 (OR4A16) from Homo sapiens (Human).